Reading from the N-terminus, the 216-residue chain is Adenylate kinase (216 aa).

10–15 (GAGKGT) is an ATP binding site. The segment at 30–59 (STGDMFRAAMKAETEMGLQAKSFIDKGALV) is NMP. AMP contacts are provided by residues Thr31, Arg36, 57-59 (ALV), 85-88 (GFPR), and Gln92. The interval 126 to 163 (GRRICKECGATYHLEFNAPAKADVCDKCGGELYQRSDD) is LID. Arg127 provides a ligand contact to ATP. Residues Cys130 and Cys133 each coordinate Zn(2+). 136-137 (TY) is a binding site for ATP. Cys150 and Cys153 together coordinate Zn(2+). AMP is bound by residues Arg160 and Arg171. Gln199 is an ATP binding site.

The protein belongs to the adenylate kinase family. In terms of assembly, monomer.

The protein localises to the cytoplasm. The enzyme catalyses AMP + ATP = 2 ADP. Its pathway is purine metabolism; AMP biosynthesis via salvage pathway; AMP from ADP: step 1/1. Catalyzes the reversible transfer of the terminal phosphate group between ATP and AMP. Plays an important role in cellular energy homeostasis and in adenine nucleotide metabolism. The polypeptide is Adenylate kinase (Bacillus anthracis (strain A0248)).